A 251-amino-acid chain; its full sequence is Ubiquinone/menaquinone biosynthesis C-methyltransferase UbiE (251 aa).

S-adenosyl-L-methionine contacts are provided by residues Thr-74, Asp-95, and 123 to 124 (NA).

This sequence belongs to the class I-like SAM-binding methyltransferase superfamily. MenG/UbiE family.

It catalyses the reaction a 2-demethylmenaquinol + S-adenosyl-L-methionine = a menaquinol + S-adenosyl-L-homocysteine + H(+). The enzyme catalyses a 2-methoxy-6-(all-trans-polyprenyl)benzene-1,4-diol + S-adenosyl-L-methionine = a 5-methoxy-2-methyl-3-(all-trans-polyprenyl)benzene-1,4-diol + S-adenosyl-L-homocysteine + H(+). Its pathway is quinol/quinone metabolism; menaquinone biosynthesis; menaquinol from 1,4-dihydroxy-2-naphthoate: step 2/2. It participates in cofactor biosynthesis; ubiquinone biosynthesis. In terms of biological role, methyltransferase required for the conversion of demethylmenaquinol (DMKH2) to menaquinol (MKH2) and the conversion of 2-polyprenyl-6-methoxy-1,4-benzoquinol (DDMQH2) to 2-polyprenyl-3-methyl-6-methoxy-1,4-benzoquinol (DMQH2). The polypeptide is Ubiquinone/menaquinone biosynthesis C-methyltransferase UbiE (Shewanella frigidimarina (strain NCIMB 400)).